The primary structure comprises 596 residues: Aspartic proteinase yapsin-7 (596 aa).

The N-terminal stretch at 1-25 (MTCLILWYLWLISTFQLEFATASTA) is a signal peptide. N-linked (GlcNAc...) asparagine glycans are attached at residues asparagine 26 and asparagine 59. Over 26 to 575 (NTTTTAKSGT…SPYTFNKDPA (550 aa)) the chain is Lumenal. The Peptidase A1 domain maps to 56-440 (YYVNSTFGTP…DLEDNTIAIA (385 aa)). Aspartate 74 is a catalytic residue. N-linked (GlcNAc...) asparagine glycans are attached at residues asparagine 106, asparagine 131, asparagine 140, asparagine 143, asparagine 148, asparagine 175, and asparagine 308. Aspartate 321 is an active-site residue. Residues asparagine 391, asparagine 455, asparagine 478, asparagine 484, asparagine 549, and asparagine 552 are each glycosylated (N-linked (GlcNAc...) asparagine). A helical membrane pass occupies residues 576-596 (GHVTRIASLLLLSIFSILIVL).

It belongs to the peptidase A1 family.

The protein resides in the cytoplasm. It is found in the endoplasmic reticulum membrane. The sequence is that of Aspartic proteinase yapsin-7 (YPS7) from Saccharomyces cerevisiae (strain ATCC 204508 / S288c) (Baker's yeast).